A 497-amino-acid polypeptide reads, in one-letter code: Serine carboxypeptidase-like 20 (497 aa).

Residues 1–29 (MSIITMVWLMKVFVFVTLLSLVFVITESA) form the signal peptide. 3 disulfide bridges follow: Cys90–Cys386, Cys254–Cys266, and Cys289–Cys353. N-linked (GlcNAc...) asparagine glycosylation is found at Asn111 and Asn146. The active site involves Ser186. An N-linked (GlcNAc...) asparagine glycan is attached at Asn249. N-linked (GlcNAc...) asparagine glycosylation is present at Asn405. Asp421 is an active-site residue. Asn463 carries an N-linked (GlcNAc...) asparagine glycan. The active site involves His474. The short motif at 495-497 (SKI) is the Microbody targeting signal element.

The protein belongs to the peptidase S10 family. In terms of tissue distribution, ubiquitous.

The protein localises to the secreted. Its function is as follows. Probable carboxypeptidase. This is Serine carboxypeptidase-like 20 (SCPL20) from Arabidopsis thaliana (Mouse-ear cress).